Consider the following 108-residue polypeptide: uncharacterized protein (108 aa).

Asn-33 is a glycosylation site (N-linked (GlcNAc...) asparagine).

N-glycosylated.

This is an uncharacterized protein from Saccharomyces cerevisiae (strain ATCC 204508 / S288c) (Baker's yeast).